A 178-amino-acid polypeptide reads, in one-letter code: Large ribosomal subunit protein uL10 (178 aa).

Belongs to the universal ribosomal protein uL10 family. Part of the ribosomal stalk of the 50S ribosomal subunit. The N-terminus interacts with L11 and the large rRNA to form the base of the stalk. The C-terminus forms an elongated spine to which L12 dimers bind in a sequential fashion forming a multimeric L10(L12)X complex.

Forms part of the ribosomal stalk, playing a central role in the interaction of the ribosome with GTP-bound translation factors. The chain is Large ribosomal subunit protein uL10 from Gloeothece citriformis (strain PCC 7424) (Cyanothece sp. (strain PCC 7424)).